The following is a 234-amino-acid chain: Endonuclease V (234 aa).

Residues Asp-36 and Asp-104 each contribute to the Mg(2+) site.

It belongs to the endonuclease V family. It depends on Mg(2+) as a cofactor.

It is found in the cytoplasm. The catalysed reaction is Endonucleolytic cleavage at apurinic or apyrimidinic sites to products with a 5'-phosphate.. Functionally, DNA repair enzyme involved in the repair of deaminated bases. Selectively cleaves double-stranded DNA at the second phosphodiester bond 3' to a deoxyinosine leaving behind the intact lesion on the nicked DNA. The chain is Endonuclease V from Yersinia enterocolitica serotype O:8 / biotype 1B (strain NCTC 13174 / 8081).